The following is a 177-amino-acid chain: 18.9 kDa heat shock protein (177 aa).

Residues 1-35 (MSMITSMLGRKQNAQQKGGGGGGRTGGGGGGEIEP) are disordered. Positions 17–32 (KGGGGGGRTGGGGGGE) are enriched in gly residues. In terms of domain architecture, sHSP spans 63-177 (AAGVPSTASM…PHARIIPITN (115 aa)).

The protein belongs to the small heat shock protein (HSP20) family. As to quaternary structure, may form oligomeric structures.

The protein resides in the cytoplasm. In Oryza sativa subsp. japonica (Rice), this protein is 18.9 kDa heat shock protein (HSP18.9).